A 545-amino-acid polypeptide reads, in one-letter code: CTP synthase (545 aa).

The amidoligase domain stretch occupies residues 1–266 (MATNYIFVTG…DDFVCERFRL (266 aa)). CTP is bound at residue Ser14. Ser14 lines the UTP pocket. ATP is bound by residues 15–20 (SLGKGI) and Asp72. Mg(2+) contacts are provided by Asp72 and Glu140. CTP-binding positions include 147 to 149 (DIE), 187 to 192 (KTKPTQ), and Lys223. UTP-binding positions include 187–192 (KTKPTQ) and Lys223. An ATP-binding site is contributed by 239-241 (KDV). Positions 291–542 (TIGMVGKYTE…VKAAYENHKK (252 aa)) constitute a Glutamine amidotransferase type-1 domain. Position 352 (Gly352) interacts with L-glutamine. Cys379 serves as the catalytic Nucleophile; for glutamine hydrolysis. Residues 380-383 (LGMQ), Glu403, and Arg470 contribute to the L-glutamine site. Active-site residues include His515 and Glu517.

It belongs to the CTP synthase family. Homotetramer.

It carries out the reaction UTP + L-glutamine + ATP + H2O = CTP + L-glutamate + ADP + phosphate + 2 H(+). The catalysed reaction is L-glutamine + H2O = L-glutamate + NH4(+). It catalyses the reaction UTP + NH4(+) + ATP = CTP + ADP + phosphate + 2 H(+). It participates in pyrimidine metabolism; CTP biosynthesis via de novo pathway; CTP from UDP: step 2/2. With respect to regulation, allosterically activated by GTP, when glutamine is the substrate; GTP has no effect on the reaction when ammonia is the substrate. The allosteric effector GTP functions by stabilizing the protein conformation that binds the tetrahedral intermediate(s) formed during glutamine hydrolysis. Inhibited by the product CTP, via allosteric rather than competitive inhibition. Its function is as follows. Catalyzes the ATP-dependent amination of UTP to CTP with either L-glutamine or ammonia as the source of nitrogen. Regulates intracellular CTP levels through interactions with the four ribonucleotide triphosphates. This Haemophilus influenzae (strain ATCC 51907 / DSM 11121 / KW20 / Rd) protein is CTP synthase.